The chain runs to 329 residues: Beta-ketoacyl-[acyl-carrier-protein] synthase III (329 aa).

Active-site residues include Cys114 and His255. Residues 256–260 (QANQR) are ACP-binding. Residue Asn285 is part of the active site.

Belongs to the thiolase-like superfamily. FabH family. As to quaternary structure, homodimer.

The protein resides in the cytoplasm. The enzyme catalyses malonyl-[ACP] + acetyl-CoA + H(+) = 3-oxobutanoyl-[ACP] + CO2 + CoA. Its pathway is lipid metabolism; fatty acid biosynthesis. Catalyzes the condensation reaction of fatty acid synthesis by the addition to an acyl acceptor of two carbons from malonyl-ACP. Catalyzes the first condensation reaction which initiates fatty acid synthesis and may therefore play a role in governing the total rate of fatty acid production. Possesses both acetoacetyl-ACP synthase and acetyl transacylase activities. Its substrate specificity determines the biosynthesis of branched-chain and/or straight-chain of fatty acids. The sequence is that of Beta-ketoacyl-[acyl-carrier-protein] synthase III from Thermosynechococcus vestitus (strain NIES-2133 / IAM M-273 / BP-1).